We begin with the raw amino-acid sequence, 690 residues long: Glycine--tRNA ligase beta subunit (690 aa).

It belongs to the class-II aminoacyl-tRNA synthetase family. As to quaternary structure, tetramer of two alpha and two beta subunits.

The protein localises to the cytoplasm. The catalysed reaction is tRNA(Gly) + glycine + ATP = glycyl-tRNA(Gly) + AMP + diphosphate. The sequence is that of Glycine--tRNA ligase beta subunit from Buchnera aphidicola subsp. Acyrthosiphon pisum (strain 5A).